We begin with the raw amino-acid sequence, 152 residues long: Ribosome maturation factor RimP (152 aa).

The protein belongs to the RimP family.

It localises to the cytoplasm. In terms of biological role, required for maturation of 30S ribosomal subunits. The chain is Ribosome maturation factor RimP from Pseudoalteromonas atlantica (strain T6c / ATCC BAA-1087).